We begin with the raw amino-acid sequence, 493 residues long: Xaa-Pro dipeptidase (493 aa).

Ala-2 is subject to N-acetylalanine. Phosphoserine is present on Ser-167. Residue His-255 participates in a dipeptide binding. Mn(2+) is bound by residues Asp-276, Asp-287, and His-370. Position 287 (Asp-287) interacts with a dipeptide. 2 residues coordinate a dipeptide: His-377 and Arg-398. Positions 412 and 452 each coordinate Mn(2+).

The protein belongs to the peptidase M24B family. Eukaryotic-type prolidase subfamily. As to quaternary structure, homodimer. Mn(2+) serves as cofactor.

The enzyme catalyses Xaa-L-Pro dipeptide + H2O = an L-alpha-amino acid + L-proline. In terms of biological role, dipeptidase that catalyzes the hydrolysis of dipeptides with a prolyl (Xaa-Pro) or hydroxyprolyl residue in the C-terminal position. The preferred dipeptide substrate is Gly-Pro, but other Xaa-Pro dipeptides, such as Ala-Pro, Met-Pro, Phe-Pro, Val-Pro and Leu-Pro, can be cleaved. Plays an important role in collagen metabolism because the high level of iminoacids in collagen. This is Xaa-Pro dipeptidase (PEPD) from Pongo abelii (Sumatran orangutan).